Here is a 283-residue protein sequence, read N- to C-terminus: Pantothenate synthetase (283 aa).

26–33 (MGNLHAGH) contributes to the ATP binding site. The active-site Proton donor is the H33. Q57 is a (R)-pantoate binding site. Q57 serves as a coordination point for beta-alanine. 144–147 (GRKD) is an ATP binding site. Q150 contacts (R)-pantoate. ATP contacts are provided by residues L173 and 181 to 184 (MSSR).

Belongs to the pantothenate synthetase family. As to quaternary structure, homodimer.

It localises to the cytoplasm. It carries out the reaction (R)-pantoate + beta-alanine + ATP = (R)-pantothenate + AMP + diphosphate + H(+). The protein operates within cofactor biosynthesis; (R)-pantothenate biosynthesis; (R)-pantothenate from (R)-pantoate and beta-alanine: step 1/1. In terms of biological role, catalyzes the condensation of pantoate with beta-alanine in an ATP-dependent reaction via a pantoyl-adenylate intermediate. This is Pantothenate synthetase from Thiobacillus denitrificans (strain ATCC 25259 / T1).